Reading from the N-terminus, the 88-residue chain is Insulin-related peptide 4 (88 aa).

Positions 1–19 (MKLTLIILLVVAYSWCSEA) are cleaved as a signal peptide. A propeptide spanning residues 20–45 (QNEARVFCGRVLSERLAALCWGPNSV) is cleaved from the precursor. An Arginine amide modification is found at R65. A propeptide spanning residues 69–88 (GLATECCDKACTVEELLSYC) is cleaved from the precursor.

The protein belongs to the insulin family. In terms of tissue distribution, DAGWWLTRGAARSLGGVR-amide: Expressed in corpora cardiaca (CC), corpora allata (CA), antennal lobe (AL) and gnathal ganglion (GNG) (at protein level). Expression in CC and CA detected in most animals, in AL and GNG in few animals (at protein level).

The protein resides in the secreted. This is Insulin-related peptide 4 from Agrotis ipsilon (Black cutworm moth).